The following is a 334-amino-acid chain: Hematopoietic SH2 domain-containing protein (334 aa).

Residues tryptophan 34–cysteine 125 enclose the SH2 domain. Disordered stretches follow at residues glutamate 157–phenylalanine 181 and glutamate 254–arginine 280. Positions alanine 258–alanine 267 are enriched in polar residues.

As to quaternary structure, interacts with FES and TNK2. May be phosphorylated by FES and ACK1. Predominantly expressed in spleen and thymus. Appears not to be expressed in heart, brain, liver, kidney, embryo, lung and ovary.

It is found in the cytoplasm. It localises to the mitochondrion. Adapter protein involved in tyrosine kinase and CD28 signaling. May be a modulator of the apoptotic response through its ability to affect mitochondrial stability. The polypeptide is Hematopoietic SH2 domain-containing protein (Hsh2d) (Mus musculus (Mouse)).